A 152-amino-acid chain; its full sequence is Large ribosomal subunit protein bL9 (152 aa).

The segment at 41-61 is disordered; that stretch reads QSAMSQLNAERKAEQRREAEE. A compositionally biased stretch (basic and acidic residues) spans 49–61; the sequence is AERKAEQRREAEE.

It belongs to the bacterial ribosomal protein bL9 family.

Its function is as follows. Binds to the 23S rRNA. The protein is Large ribosomal subunit protein bL9 of Levilactobacillus brevis (strain ATCC 367 / BCRC 12310 / CIP 105137 / JCM 1170 / LMG 11437 / NCIMB 947 / NCTC 947) (Lactobacillus brevis).